Consider the following 73-residue polypeptide: UPF0154 protein LJ_1506 (73 aa).

Residues 3–23 (LGLAIFLIIIALLIGLVGGFY) traverse the membrane as a helical segment.

The protein belongs to the UPF0154 family.

Its subcellular location is the cell membrane. This is UPF0154 protein LJ_1506 from Lactobacillus johnsonii (strain CNCM I-12250 / La1 / NCC 533).